Consider the following 60-residue polypeptide: Cytotoxin 2 (60 aa).

4 cysteine pairs are disulfide-bonded: C3-C21, C14-C38, C42-C53, and C54-C59.

The protein belongs to the three-finger toxin family. Short-chain subfamily. Type IA cytotoxin sub-subfamily. In terms of assembly, monomer in solution; Homodimer and oligomer in the presence of negatively charged lipids forming a pore with a size ranging between 20 and 30 Angstroms. Expressed by the venom gland.

It is found in the secreted. Its subcellular location is the target cell membrane. Its function is as follows. Shows cytolytic activity on many different cells by forming pore in lipid membranes. In vivo, increases heart rate or kills the animal by cardiac arrest. In addition, it binds to heparin with high affinity, interacts with Kv channel-interacting protein 1 (KCNIP1) in a calcium-independent manner, and binds to integrin alpha-V/beta-3 (ITGAV/ITGB3) with moderate affinity. This Naja mossambica (Mozambique spitting cobra) protein is Cytotoxin 2.